Reading from the N-terminus, the 235-residue chain is N-alpha-acetyltransferase 10 (235 aa).

Position 1 is an N-acetylmethionine (M1). Residues 1–58 (MNIRNARPEDLMNMQHCNLLCLPENYQMKYYFYHGLSWPQLSYIAEDENGKIVGYVLA) form an interaction with NAA15 region. One can recognise an N-acetyltransferase domain in the interval 1–152 (MNIRNARPED…DAYAMKRDLT (152 aa)). The residue at position 136 (K136) is an N6-acetyllysine; by autocatalysis. Residues 196–213 (EEKGLAAEDSGGDSKDLS) show a composition bias toward basic and acidic residues. A disordered region spans residues 196-235 (EEKGLAAEDSGGDSKDLSEVSETTESTDVKDSSEASDSAS). Residue S205 is modified to Phosphoserine. S209 bears the Phosphoserine; by IKKB mark. 2 positions are modified to phosphoserine: S213 and S216.

This sequence belongs to the acetyltransferase family. ARD1 subfamily. In terms of assembly, component of the N-terminal acetyltransferase A complex (also called the NatA complex) composed of NAA10 and NAA15. Interacts with NAA15. Component of the N-terminal acetyltransferase A (NatA)/HYPK complex at least composed of NAA10, NAA15 and HYPK, which has N-terminal acetyltransferase activity. In complex with NAA15, interacts with HYPK. Component of the N-terminal acetyltransferase E (NatE) complex at least composed of NAA10, NAA15 and NAA50. Within the complex interacts with NAA15; the interaction is required for binding to NAAT50. Interacts with NAAT50. The interaction of the NatA complex with NAA50 reduces the acetylation activity of the NatA complex. Component of the N-terminal acetyltransferase E (NatE)/HYPK complex at least composed of NAA10, NAA15, NAA50 and HYPK. In complex with NAA15, interacts with HYPK; the interaction with HYPK reduces the capacity of the NatA complex to interact with NAA50. Interacts with HIF1A (via its ODD domain); the interaction increases HIF1A protein stability during normoxia, an down-regulates it when induced by hypoxia. Interacts with the ribosome. Binds to MYLK. Interacts with NAA16. Interacts (via its C-terminal domain) with TSC2, leading to its acetylation. Interacts with IKBKB. Interacts with HSPA1A and HSPA1B leading to its acetylation. Post-translationally, cleaved by caspases during apoptosis. Phosphorylation by IKBKB/IKKB at Ser-209 destabilises NAA10 and promotes its proteasome-mediated degradation. In terms of processing, autoacetylated at Lys-136 which stimulates its catalytic activity. Ubiquitous.

It is found in the cytoplasm. Its subcellular location is the nucleus. The enzyme catalyses N-terminal glycyl-[protein] + acetyl-CoA = N-terminal N(alpha)-acetylglycyl-[protein] + CoA + H(+). The catalysed reaction is N-terminal L-alanyl-[protein] + acetyl-CoA = N-terminal N(alpha)-acetyl-L-alanyl-[protein] + CoA + H(+). It carries out the reaction N-terminal L-seryl-[protein] + acetyl-CoA = N-terminal N(alpha)-acetyl-L-seryl-[protein] + CoA + H(+). It catalyses the reaction N-terminal L-valyl-[protein] + acetyl-CoA = N-terminal N(alpha)-acetyl-L-valyl-[protein] + CoA + H(+). The enzyme catalyses N-terminal L-cysteinyl-[protein] + acetyl-CoA = N-terminal N(alpha)-acetyl-L-cysteinyl-[protein] + CoA + H(+). The catalysed reaction is N-terminal L-threonyl-[protein] + acetyl-CoA = N-terminal N(alpha)-acetyl-L-threonyl-[protein] + CoA + H(+). In terms of biological role, catalytic subunit of the N-terminal acetyltransferase A (NatA) complex which displays alpha (N-terminal) acetyltransferase activity. Acetylates amino termini that are devoid of initiator methionine. The alpha (N-terminal) acetyltransferase activity may be important for vascular, hematopoietic and neuronal growth and development. Without NAA15, displays epsilon (internal) acetyltransferase activity towards HIF1A, thereby promoting its degradation. Represses MYLK kinase activity by acetylation, and thus represses tumor cell migration. Acetylates, and stabilizes TSC2, thereby repressing mTOR activity and suppressing cancer development. Acetylates HSPA1A and HSPA1B at 'Lys-77' which enhances its chaperone activity and leads to preferential binding to co-chaperone HOPX. Acetylates HIST1H4A. Acts as a negative regulator of sister chromatid cohesion during mitosis. The chain is N-alpha-acetyltransferase 10 (Naa10) from Mus musculus (Mouse).